Consider the following 511-residue polypeptide: Maturase K (511 aa).

The protein belongs to the intron maturase 2 family. MatK subfamily.

It is found in the plastid. The protein localises to the chloroplast. Functionally, usually encoded in the trnK tRNA gene intron. Probably assists in splicing its own and other chloroplast group II introns. The sequence is that of Maturase K from Hordeum bulbosum (Bulbous barley).